Reading from the N-terminus, the 234-residue chain is Enolase-phosphatase E1 (234 aa).

Mg(2+) contacts are provided by D10 and E12. Substrate-binding positions include 125 to 126 (SS) and K162. A Mg(2+)-binding site is contributed by D188.

Belongs to the HAD-like hydrolase superfamily. MasA/MtnC family. Monomer. Mg(2+) serves as cofactor.

Its subcellular location is the cytoplasm. The protein resides in the nucleus. The enzyme catalyses 5-methylsulfanyl-2,3-dioxopentyl phosphate + H2O = 1,2-dihydroxy-5-(methylsulfanyl)pent-1-en-3-one + phosphate. The protein operates within amino-acid biosynthesis; L-methionine biosynthesis via salvage pathway; L-methionine from S-methyl-5-thio-alpha-D-ribose 1-phosphate: step 3/6. It participates in amino-acid biosynthesis; L-methionine biosynthesis via salvage pathway; L-methionine from S-methyl-5-thio-alpha-D-ribose 1-phosphate: step 4/6. In terms of biological role, bifunctional enzyme that catalyzes the enolization of 2,3-diketo-5-methylthiopentyl-1-phosphate (DK-MTP-1-P) into the intermediate 2-hydroxy-3-keto-5-methylthiopentenyl-1-phosphate (HK-MTPenyl-1-P), which is then dephosphorylated to form the acireductone 1,2-dihydroxy-3-keto-5-methylthiopentene (DHK-MTPene). In Neurospora crassa (strain ATCC 24698 / 74-OR23-1A / CBS 708.71 / DSM 1257 / FGSC 987), this protein is Enolase-phosphatase E1 (utr4).